The following is a 193-amino-acid chain: Large ribosomal subunit protein uL18 (193 aa).

This sequence belongs to the universal ribosomal protein uL18 family. In terms of assembly, part of the 50S ribosomal subunit. Contacts the 5S and 23S rRNAs.

This is one of the proteins that bind and probably mediate the attachment of the 5S RNA into the large ribosomal subunit, where it forms part of the central protuberance. This is Large ribosomal subunit protein uL18 from Methanococcus maripaludis (strain C6 / ATCC BAA-1332).